Reading from the N-terminus, the 149-residue chain is Large ribosomal subunit protein uL22 (149 aa).

The protein belongs to the universal ribosomal protein uL22 family. In terms of assembly, part of the 50S ribosomal subunit.

Functionally, this protein binds specifically to 23S rRNA; its binding is stimulated by other ribosomal proteins, e.g. L4, L17, and L20. It is important during the early stages of 50S assembly. It makes multiple contacts with different domains of the 23S rRNA in the assembled 50S subunit and ribosome. In terms of biological role, the globular domain of the protein is located near the polypeptide exit tunnel on the outside of the subunit, while an extended beta-hairpin is found that lines the wall of the exit tunnel in the center of the 70S ribosome. This Petrotoga mobilis (strain DSM 10674 / SJ95) protein is Large ribosomal subunit protein uL22.